A 382-amino-acid chain; its full sequence is Na(+)/H(+) antiporter NhaA (382 aa).

The next 11 helical transmembrane spans lie at 14–34, 47–67, 87–107, 117–137, 146–166, 171–191, 205–225, 247–267, 271–291, 321–341, and 353–373; these read AGGILLVIAAAIAMVIANSAM, FGMSVSHWINDGLMAVFFLLI, IFPAIAAVGGMLAPALIYVAF, GWAIPAATDIAFALGIMALLG, VFLLALAIIDDLGVVVIIALF, LSTIALTIGFIMTGVLFMLNA, LILWIAVLKSGVHATLAGVVI, ALHPYVAFAILPVFAFANAGI, GVSLAGLTSMLPLGVALGLFL, IFAVSVLCGIGFTMSIFISSL, and YARLGILMGSTTAALLGYSLL.

Belongs to the NhaA Na(+)/H(+) (TC 2.A.33) antiporter family.

The protein resides in the cell inner membrane. It catalyses the reaction Na(+)(in) + 2 H(+)(out) = Na(+)(out) + 2 H(+)(in). Functionally, na(+)/H(+) antiporter that extrudes sodium in exchange for external protons. The chain is Na(+)/H(+) antiporter NhaA from Vibrio cholerae serotype O1 (strain ATCC 39541 / Classical Ogawa 395 / O395).